Here is a 461-residue protein sequence, read N- to C-terminus: Ornithine decarboxylase (461 aa).

Lysine 69 is subject to N6-(pyridoxal phosphate)lysine. Residues serine 200, glycine 237, and 274 to 277 (EPGR) contribute to the pyridoxal 5'-phosphate site. Serine 303 carries the post-translational modification Phosphoserine; by CK2. Residue 331–332 (YD) participates in substrate binding. Catalysis depends on cysteine 360, which acts as the Proton donor; shared with dimeric partner. Cysteine 360 carries the post-translational modification S-nitrosocysteine. Aspartate 361 provides a ligand contact to substrate. Tyrosine 389 provides a ligand contact to pyridoxal 5'-phosphate.

Belongs to the Orn/Lys/Arg decarboxylase class-II family. As to quaternary structure, homodimer. Only the dimer is catalytically active, as the active sites are constructed of residues from both monomers. The cofactor is pyridoxal 5'-phosphate.

It carries out the reaction L-ornithine + H(+) = putrescine + CO2. It functions in the pathway amine and polyamine biosynthesis; putrescine biosynthesis via L-ornithine pathway; putrescine from L-ornithine: step 1/1. With respect to regulation, inhibited by antizymes (AZs) OAZ1, OAZ2 and OAZ3 in response to polyamine levels. AZs inhibit the assembly of the functional homodimer by binding to ODC monomers. Additionally, OAZ1 targets ODC monomers for ubiquitin-independent proteolytic destruction by the 26S proteasome. Its function is as follows. Catalyzes the first and rate-limiting step of polyamine biosynthesis that converts ornithine into putrescine, which is the precursor for the polyamines, spermidine and spermine. Polyamines are essential for cell proliferation and are implicated in cellular processes, ranging from DNA replication to apoptosis. This is Ornithine decarboxylase (ODC1) from Bos taurus (Bovine).